The following is a 1013-amino-acid chain: RNA-binding protein 44 (1013 aa).

Disordered stretches follow at residues 1–25 (MQAT…FQND) and 56–94 (LATE…IFSQ). Basic and acidic residues predominate over residues 56-76 (LATEERASDKENSIVDQRDLS). A compositionally biased stretch (polar residues) spans 78–94 (LSFSENQDSNRGNIFSQ). 5 positions are modified to phosphoserine: S365, S368, S510, S681, and S688. An RRM domain is found at 792 to 865 (FLIHVGGLCP…KSVTVRLVKI (74 aa)). The tract at residues 905–925 (RAKSRQLESEQDSEFPPLDQG) is disordered.

Homodimer. Interacts with TEX14. In terms of tissue distribution, highly expressed in testis. Also expressed in other tissues at lower level.

The protein localises to the cytoplasm. Its function is as follows. Component of intercellular bridges during meiosis. Intercellular bridges are evolutionarily conserved structures that connect differentiating germ cells. Not required for fertility. This chain is RNA-binding protein 44 (Rbm44), found in Mus musculus (Mouse).